The following is a 307-amino-acid chain: Ribosomal protein L11 methyltransferase (307 aa).

S-adenosyl-L-methionine contacts are provided by T144, G165, D187, and N235.

This sequence belongs to the methyltransferase superfamily. PrmA family.

It localises to the cytoplasm. The catalysed reaction is L-lysyl-[protein] + 3 S-adenosyl-L-methionine = N(6),N(6),N(6)-trimethyl-L-lysyl-[protein] + 3 S-adenosyl-L-homocysteine + 3 H(+). Functionally, methylates ribosomal protein L11. The protein is Ribosomal protein L11 methyltransferase of Psychrobacter sp. (strain PRwf-1).